We begin with the raw amino-acid sequence, 168 residues long: Disulfide bond formation protein B 1 (168 aa).

Topologically, residues 1-14 (MNEQTSRLNRERRF) are cytoplasmic. A helical transmembrane segment spans residues 15–31 (LVLLGLICLSLIGGALY). The Periplasmic portion of the chain corresponds to 32–49 (MQVVLGEAPCPLCILQRY). Cys-41 and Cys-44 are disulfide-bonded. A helical transmembrane segment spans residues 50 to 65 (ALLFIAVFAFIAAAMP). Topologically, residues 66–72 (GRRSLTF) are cytoplasmic. Residues 73-89 (FEALVVLSAIGGIVAAG) traverse the membrane as a helical segment. Residues 90 to 144 (NHVYILANPMVSCGIDTLQPIVDDLPLAKLWPLAFQVDGFCSTPYPPILGLSLAQ) lie on the Periplasmic side of the membrane. Cys-102 and Cys-130 form a disulfide bridge. The helical transmembrane segment at 145–163 (WALVAFVLTAVLVPLGIYR) threads the bilayer. The Cytoplasmic segment spans residues 164–168 (NRRQA).

The protein belongs to the DsbB family.

The protein localises to the cell inner membrane. Functionally, required for disulfide bond formation in some periplasmic proteins. Acts by oxidizing the DsbA protein. In Pseudomonas putida (strain ATCC 47054 / DSM 6125 / CFBP 8728 / NCIMB 11950 / KT2440), this protein is Disulfide bond formation protein B 1 (dsbB1).